The chain runs to 101 residues: Putative monooxygenase Rv0793 (101 aa).

The ABM domain maps to 5–93; it reads VAVIARFMPR…LTRPVAVTVL (89 aa).

As to quaternary structure, homodimer.

Functionally, putative monooygenase that might be involved in antibiotic biosynthesis, or may act as reactive oxygen species scavenger that could help in evading host defenses. The polypeptide is Putative monooxygenase Rv0793 (Mycobacterium tuberculosis (strain ATCC 25618 / H37Rv)).